Consider the following 471-residue polypeptide: FAD-linked oxidoreductase sorD (471 aa).

An N-terminal signal peptide occupies residues 1–23; it reads MQAASAFATCLLASVGGNSSAVA. 5 N-linked (GlcNAc...) asparagine glycosylation sites follow: Asn-18, Asn-29, Asn-174, Asn-279, and Asn-351. In terms of domain architecture, FAD-binding PCMH-type spans 41–212; it reads LLTTPSAIVW…TDFSIRTEPV (172 aa).

This sequence belongs to the oxygen-dependent FAD-linked oxidoreductase family. FAD is required as a cofactor.

The protein operates within secondary metabolite biosynthesis. Its function is as follows. FAD-linked oxidoreductase; part of the gene cluster that mediates the biosynthesis of sorbicillinoids, a diverse group of yellow secondary metabolites that restrict growth of competing pathogenic fungi but not of bacteria. Sorbicillinoids biosynthesis requires the action of two PKSs. SorA iteratively combines three acetyl units and the growing chain is modified by the ketoacyl reductase subunit, and optional by the enoyl reductase subunit in the second cycle. The polyketide is then handed over to the PKS SorB, which adds three more acetyl units, and two methyl groups. SorB releases an aldehyde, which undergoes spontaneous cyclization resulting in the formation of sorbicillin or 2',3'-dihydrosorbicillin. The monooxygenase sorC oxidizes sorbicillin and 2',3'-dihydrosorbicillin to 2',3'-dihydrosorbicillinol and sorbicillinol, respectively. The oxidoreductase sorD further converts sorbicillinol into oxosorbicillinol. Sorbicillinol is the building block for the other sorbicillinoids such as disorbicillinol, bisvertinolon, and dihydrobisvertinolone. This chain is FAD-linked oxidoreductase sorD, found in Penicillium rubens (strain ATCC 28089 / DSM 1075 / NRRL 1951 / Wisconsin 54-1255) (Penicillium chrysogenum).